The chain runs to 892 residues: LEAF RUST 10 DISEASE-RESISTANCE LOCUS RECEPTOR-LIKE PROTEIN KINASE-like 2.8 (892 aa).

Positions 1–27 (MYYHSLSSYSILFFLFSLFHHLPCASS) are cleaved as a signal peptide. The Extracellular segment spans residues 28–496 (NQGLGWCESL…RFIATLVRYT (469 aa)). 12 N-linked (GlcNAc...) asparagine glycosylation sites follow: N42, N71, N88, N112, N186, N222, N230, N286, N358, N384, N407, and N458. A helical transmembrane segment spans residues 497-517 (FIALGALTGVVIVFLVLLCPC). At 518–892 (FRVQIFRKRK…TNSKLESSSL (375 aa)) the chain is on the cytoplasmic side. T547 is modified (phosphothreonine). The region spanning 556–854 (KSFTEVVGRG…ALEVPPRPVL (299 aa)) is the Protein kinase domain. Residues 562 to 570 (VGRGGFGIV) and K584 each bind ATP. The residue at position 629 (Y629) is a Phosphotyrosine. D680 functions as the Proton acceptor in the catalytic mechanism. 2 positions are modified to phosphothreonine: T717 and T720.

The protein belongs to the protein kinase superfamily. Ser/Thr protein kinase family.

It is found in the membrane. It carries out the reaction L-seryl-[protein] + ATP = O-phospho-L-seryl-[protein] + ADP + H(+). The catalysed reaction is L-threonyl-[protein] + ATP = O-phospho-L-threonyl-[protein] + ADP + H(+). The chain is LEAF RUST 10 DISEASE-RESISTANCE LOCUS RECEPTOR-LIKE PROTEIN KINASE-like 2.8 from Arabidopsis thaliana (Mouse-ear cress).